The following is a 167-amino-acid chain: Lipoprotein signal peptidase (167 aa).

A run of 3 helical transmembrane segments spans residues 8-28 (FFLL…YWIM), 61-81 (FSHW…LWLW), and 93-113 (FGLT…ICFY). Residues Asp117 and Asp136 contribute to the active site. A helical transmembrane segment spans residues 126 to 146 (IFYFAVFNLADTFITLGVIAI).

Belongs to the peptidase A8 family.

It localises to the cell inner membrane. It catalyses the reaction Release of signal peptides from bacterial membrane prolipoproteins. Hydrolyzes -Xaa-Yaa-Zaa-|-(S,diacylglyceryl)Cys-, in which Xaa is hydrophobic (preferably Leu), and Yaa (Ala or Ser) and Zaa (Gly or Ala) have small, neutral side chains.. Its pathway is protein modification; lipoprotein biosynthesis (signal peptide cleavage). In terms of biological role, this protein specifically catalyzes the removal of signal peptides from prolipoproteins. In Bartonella quintana (strain Toulouse) (Rochalimaea quintana), this protein is Lipoprotein signal peptidase.